Reading from the N-terminus, the 243-residue chain is Small ribosomal subunit protein uS3 (243 aa).

The KH type-2 domain maps to 39–107 (IRAYLIKELK…ETHLNIVEVR (69 aa)). The interval 214-243 (ASERRGLEGDAQGPASRERGDRPDRRRENA) is disordered. Residues 229 to 243 (SRERGDRPDRRRENA) are compositionally biased toward basic and acidic residues.

This sequence belongs to the universal ribosomal protein uS3 family. Part of the 30S ribosomal subunit. Forms a tight complex with proteins S10 and S14.

Functionally, binds the lower part of the 30S subunit head. Binds mRNA in the 70S ribosome, positioning it for translation. This is Small ribosomal subunit protein uS3 from Agrobacterium fabrum (strain C58 / ATCC 33970) (Agrobacterium tumefaciens (strain C58)).